The chain runs to 689 residues: Beta-adrenergic receptor kinase 1 (689 aa).

Residues Met1–Asp190 form an N-terminal region. In terms of domain architecture, RGS spans Thr54 to Cys175. The Protein kinase domain occupies Phe191–Phe453. Residues Ile197–Val205 and Lys220 contribute to the ATP site. Asp317 (proton acceptor) is an active-site residue. The AGC-kinase C-terminal domain maps to Arg454–Val521. A PH domain is found at Asp558–Arg652. At Ser670 the chain carries Phosphoserine.

The protein belongs to the protein kinase superfamily. AGC Ser/Thr protein kinase family. GPRK subfamily. In terms of assembly, interacts with the heterodimer formed by GNB1 and GNG2. Interacts with GIT1. Interacts with, and phosphorylates chemokine-stimulated CCR5. Interacts with ARRB1. Interacts with LPAR1 and LPAR2. Interacts with RALA in response to LPAR1 activation. ADRBK1 and RALA mutually inhibit each other's binding to LPAR1. Interacts with ADRB2.

It localises to the cytoplasm. It is found in the cell membrane. Its subcellular location is the postsynapse. The protein localises to the presynapse. The catalysed reaction is [beta-adrenergic receptor] + ATP = [beta-adrenergic receptor]-phosphate + ADP + H(+). Its activity is regulated as follows. In contrast to other AGC family kinases, the catalytic activity is solely regulated by the binding of substrates and ligands, not by phosphorylation of the kinase domain. Specifically phosphorylates the agonist-occupied form of the beta-adrenergic and closely related receptors, probably inducing a desensitization of them. Key regulator of LPAR1 signaling. Competes with RALA for binding to LPAR1 thus affecting the signaling properties of the receptor. Desensitizes LPAR1 and LPAR2 in a phosphorylation-independent manner. Positively regulates ciliary smoothened (SMO)-dependent Hedgehog (Hh) signaling pathway by facilitating the trafficking of SMO into the cilium and the stimulation of SMO activity. Inhibits relaxation of airway smooth muscle in response to blue light. The sequence is that of Beta-adrenergic receptor kinase 1 from Mus musculus (Mouse).